The primary structure comprises 816 residues: Protein hunchback (816 aa).

4 disordered regions span residues 33–92 (LSHH…QPMD), 129–151 (QQHFQAAQHQQQQHHHLALGGFN), 165–185 (YYGGNMRPSPQPTPTAAPTAV), and 197–229 (ALTPPMDVTPPKSPAKSQQSSAEPEKEHDLMSN). 3 stretches are compositionally biased toward low complexity: residues 49-60 (SNSNSGASSPRQ), 79-89 (QQQQQQQQQQQ), and 129-139 (QQHFQAAQHQQ). At Thr199 the chain carries Phosphothreonine. Ser209, Ser228, Ser230, and Ser231 each carry phosphoserine. Residues 219-229 (EPEKEHDLMSN) are compositionally biased toward basic and acidic residues. 4 C2H2-type zinc fingers span residues 261-283 (YKCKTCGVVAITKVDFWAHTRTH), 290-312 (LQCAKCPFVTEFKHHLEYHIRKH), 318-340 (FQCDKCSYTCVNKSMLNSHRKSH), and 346-364 (YRCADCDYATKYCHSFKLH). 3 disordered regions span residues 387–427 (VIDV…QQQQ), 536–612 (LQQQ…QLPH), and 679–734 (GSSA…SNPT). 2 stretches are compositionally biased toward low complexity: residues 399-427 (SKSFSGSGSSCSSTSKRSNASAAAAQQQQ) and 536-560 (LQQQQQQQHQQQQQQQQQQQQQQQQ). Residues 567-578 (NEEDEEEEEHED) show a composition bias toward acidic residues. Residues Ser584 and Ser587 each carry the phosphoserine modification. Low complexity predominate over residues 712–734 (SASSTASSSGNSSNASSSTSNPT). C2H2-type zinc fingers lie at residues 763–785 (YECKYCDIYFKDAVLYTIHMGYH) and 791–815 (FKCNMCGEKCDGPVGLFVHMARNAH).

The protein belongs to the hunchback C2H2-type zinc-finger protein family.

The protein localises to the nucleus. Gap class segmentation protein that controls development of head structures. The chain is Protein hunchback from Drosophila virilis (Fruit fly).